Reading from the N-terminus, the 5381-residue chain is Protein purity of essence (5381 aa).

Disordered regions lie at residues 140-174 (KHPE…PKLE), 339-364 (QQQT…TSKD), 599-621 (SPET…QKSA), 683-709 (RNDS…SSGS), 1162-1212 (SGGD…STET), and 1632-1659 (QAAQ…QSER). The span at 339 to 350 (QQQTAAAASTSQ) shows a compositional bias: low complexity. 2 stretches are compositionally biased toward low complexity: residues 690-709 (SPPS…SSGS) and 1167-1176 (SSCTSAASSS). Positions 1632-1646 (QAAQPNPSEESSQAC) are enriched in polar residues. The span at 1647 to 1658 (DHSEGGEQRQSE) shows a compositional bias: basic and acidic residues. Residues 1815–1884 (KLCTFSQTQK…EDGSCQALSR (70 aa)) form a UBR-type zinc finger. Disordered stretches follow at residues 1917 to 1939 (KRSN…KDSI), 2443 to 2479 (KNTT…KQLT), 2632 to 2652 (PDDS…TATQ), 3037 to 3143 (VSAG…DNNE), 3537 to 3562 (KQQQ…DREK), and 4247 to 4280 (HHQQ…KEAA). Composition is skewed to polar residues over residues 1920-1930 (NTAPGATQQQH), 2470-2479 (SSQQHQKQLT), 2643-2652 (SGPTPVTATQ), and 3048-3058 (NVATDGSTLRT). A compositionally biased stretch (gly residues) spans 3065 to 3075 (GSGGSESGGSG). Positions 3084–3104 (ARSSNFGDHPNTTPPRQSCSS) are enriched in polar residues. Residues 3119-3132 (SGSGGSASVPGGGL) show a composition bias toward gly residues. The segment at 4904-5374 (PSLKYILRFL…SFIEDLLASL (471 aa)) is UBR4 E3 catalytic module. The HemiRING-type zinc-finger motif lies at 5022–5136 (GLTCFICREG…SSYMQESTQR (115 aa)). Cys5025, Cys5028, His5074, and Cys5077 together coordinate Zn(2+). One can recognise a UZI domain in the interval 5139–5374 (ISYTSSIHDL…SFIEDLLASL (236 aa)).

The protein belongs to the UBR4 family.

In terms of biological role, has a role in growth of the perineurial glial layer of the larval peripheral nerve. May have a role in male fertility and eye development or function. May bind calmodulin. The chain is Protein purity of essence from Drosophila pseudoobscura pseudoobscura (Fruit fly).